The following is a 349-amino-acid chain: Very-long-chain 3-oxoacyl-CoA reductase (349 aa).

The chain crosses the membrane as a helical span at residues 29-49 (AASLVFATGGLFLLSRGLSFL). Residues Leu74, Asp129, Asp137, Asn156, Tyr223, Lys227, Val256, and Ser258 each contribute to the NADP(+) site. Tyr223 (proton donor) is an active-site residue. Lys227 acts as the Lowers pKa of active site Tyr in catalysis.

Belongs to the short-chain dehydrogenases/reductases (SDR) family.

It is found in the endoplasmic reticulum membrane. The enzyme catalyses a very-long-chain (3R)-3-hydroxyacyl-CoA + NADP(+) = a very-long-chain 3-oxoacyl-CoA + NADPH + H(+). The protein operates within lipid metabolism; fatty acid biosynthesis. In terms of biological role, component of the microsomal membrane bound fatty acid elongation system, which produces the 26-carbon very long-chain fatty acids (VLCFA) from palmitate. Catalyzes the reduction of the 3-ketoacyl-CoA intermediate that is formed in each cycle of fatty acid elongation. VLCFAs serve as precursors for ceramide and sphingolipids. The chain is Very-long-chain 3-oxoacyl-CoA reductase from Coccidioides immitis (strain RS) (Valley fever fungus).